Here is a 208-residue protein sequence, read N- to C-terminus: Guanylate kinase (208 aa).

In terms of domain architecture, Guanylate kinase-like spans 5-184 (GLLIVFSGPS…AAERVKCVIE (180 aa)). An ATP-binding site is contributed by 12–19 (GPSGVGKG).

Belongs to the guanylate kinase family.

The protein localises to the cytoplasm. It catalyses the reaction GMP + ATP = GDP + ADP. In terms of biological role, essential for recycling GMP and indirectly, cGMP. The polypeptide is Guanylate kinase (Streptococcus pneumoniae serotype 4 (strain ATCC BAA-334 / TIGR4)).